The primary structure comprises 50 residues: Photosystem I reaction center subunit IX (50 aa).

Residues 7–27 (YLSTAPVLAILCCSFLAGLVI) form a helical membrane-spanning segment.

The protein belongs to the PsaJ family.

Its subcellular location is the plastid. It is found in the chloroplast thylakoid membrane. Its function is as follows. May help in the organization of the PsaE and PsaF subunits. The protein is Photosystem I reaction center subunit IX of Pinus koraiensis (Korean pine).